We begin with the raw amino-acid sequence, 342 residues long: Ketoreductase nvfG (342 aa).

Belongs to the NAD(P)-dependent epimerase/dehydratase family. Dihydroflavonol-4-reductase subfamily.

Its pathway is secondary metabolite biosynthesis; terpenoid biosynthesis. Ketoreductase; part of the gene cluster that mediates the biosynthesis of novofumigatonin, a heavily oxygenated meroterpenoid containing a unique orthoester moiety. The first step of the pathway is the synthesis of 3,5-dimethylorsellinic acid (DMOA) by the polyketide synthase nvfA via condensation of one acetyl-CoA starter unit with 3 malonyl-CoA units and 2 methylations. DMOA is then converted to farnesyl-DMOA by the farnesyltransferase nvfB. Epoxydation by FAD-dependent monooxygenase nvfK, followed by a protonation-initiated cyclization catalyzed by the terpene cyclase nvfL leads to the production of asnavolin H. The short chain dehydrogenase nvfC then as a 3-OH dehydrogenase of asnovolin H to yield chemesin D. There are two branches to synthesize asnovolin A from chemesin D. In one branch, chemesin D undergoes Baeyer-Villiger oxidation by nvfH, methylation by nvfJ, and enoyl reduction by the nvfM D enoylreductase that reduces the double bond between C-5'and C-6', to form respectively asnovolin I, asnovolin K, and asnovolin A. In the other branch, the methylation precedes the Baeyer-Villiger oxidation and the enoyl reduction to yield asnovolin A via the asnovolin J intermediate. Asnovolin A is further converted to fumigatonoid A by the Fe(II)/2-oxoglutarate-dependent dioxygenase nvfI that catalyzes an endoperoxidation reaction. The alpha/beta hydrolase nvfD then acts as an epimerase that converts fumigatonoid A to its C-5' epimer, which then undergoes spontaneous or nvfD-catalyzed lactonization. The following step utilizes the ketoreductase nvfG to produce fumigatonoid B. The dioxygenase nvfE further converts fumigatonoid B into fumigatonoid C. Finally the Fe(II)/2-oxoglutarate-dependent dioxygenase nvfF catalyzes two rounds of oxidation to transform fumigatonoid C into the end product, novofumigatonin A. This is Ketoreductase nvfG from Aspergillus novofumigatus (strain IBT 16806).